A 383-amino-acid chain; its full sequence is Succinyl-diaminopimelate desuccinylase (383 aa).

His-74 is a binding site for Zn(2+). Asp-76 is a catalytic residue. Asp-107 lines the Zn(2+) pocket. The Proton acceptor role is filled by Glu-141. Zn(2+) contacts are provided by Glu-142, Glu-170, and His-356.

This sequence belongs to the peptidase M20A family. DapE subfamily. In terms of assembly, homodimer. The cofactor is Zn(2+). Co(2+) is required as a cofactor.

The catalysed reaction is N-succinyl-(2S,6S)-2,6-diaminopimelate + H2O = (2S,6S)-2,6-diaminopimelate + succinate. The protein operates within amino-acid biosynthesis; L-lysine biosynthesis via DAP pathway; LL-2,6-diaminopimelate from (S)-tetrahydrodipicolinate (succinylase route): step 3/3. Functionally, catalyzes the hydrolysis of N-succinyl-L,L-diaminopimelic acid (SDAP), forming succinate and LL-2,6-diaminopimelate (DAP), an intermediate involved in the bacterial biosynthesis of lysine and meso-diaminopimelic acid, an essential component of bacterial cell walls. This Cupriavidus taiwanensis (strain DSM 17343 / BCRC 17206 / CCUG 44338 / CIP 107171 / LMG 19424 / R1) (Ralstonia taiwanensis (strain LMG 19424)) protein is Succinyl-diaminopimelate desuccinylase.